We begin with the raw amino-acid sequence, 154 residues long: uncharacterized protein (154 aa).

The next 4 helical transmembrane spans lie at 20-42 (FRLF…GQFG), 62-84 (FFGY…AVLL), 91-109 (ALGA…LINY), and 113-132 (IGVQ…LLWM).

Its subcellular location is the cell membrane. This is an uncharacterized protein from Bacillus subtilis (strain 168).